Consider the following 360-residue polypeptide: Aminomethyltransferase (360 aa).

It belongs to the GcvT family. In terms of assembly, the glycine cleavage system is composed of four proteins: P, T, L and H.

The enzyme catalyses N(6)-[(R)-S(8)-aminomethyldihydrolipoyl]-L-lysyl-[protein] + (6S)-5,6,7,8-tetrahydrofolate = N(6)-[(R)-dihydrolipoyl]-L-lysyl-[protein] + (6R)-5,10-methylene-5,6,7,8-tetrahydrofolate + NH4(+). The glycine cleavage system catalyzes the degradation of glycine. The polypeptide is Aminomethyltransferase (Exiguobacterium sibiricum (strain DSM 17290 / CCUG 55495 / CIP 109462 / JCM 13490 / 255-15)).